The sequence spans 149 residues: UPF0178 protein VV1_1847 (149 aa).

The protein belongs to the UPF0178 family.

The sequence is that of UPF0178 protein VV1_1847 from Vibrio vulnificus (strain CMCP6).